The following is a 170-amino-acid chain: Putative 3-methyladenine DNA glycosylase (170 aa).

The protein belongs to the DNA glycosylase MPG family.

The sequence is that of Putative 3-methyladenine DNA glycosylase from Sodalis glossinidius.